Consider the following 189-residue polypeptide: Major capsid protein (189 aa).

Composition is skewed to basic residues over residues 1 to 18 (MPTR…RPRR) and 32 to 42 (QSRRPRRRNKR). Residues 1 to 50 (MPTRSRSKANQRRRRPRRVVVVAPSMAQPRTQSRRPRRRNKRGGGLNGSH) form a disordered region.

It belongs to the luteoviruses capsid protein family.

It is found in the virion. Its function is as follows. Major capsid protein. This chain is Major capsid protein, found in Pea enation mosaic virus-1 (strain WSG) (PEMV-1).